The primary structure comprises 436 residues: Methylenetetrahydrofolate--tRNA-(uracil-5-)-methyltransferase TrmFO (436 aa).

9 to 14 (GAGLAG) contributes to the FAD binding site.

This sequence belongs to the MnmG family. TrmFO subfamily. FAD serves as cofactor.

The protein localises to the cytoplasm. It catalyses the reaction uridine(54) in tRNA + (6R)-5,10-methylene-5,6,7,8-tetrahydrofolate + NADH + H(+) = 5-methyluridine(54) in tRNA + (6S)-5,6,7,8-tetrahydrofolate + NAD(+). The catalysed reaction is uridine(54) in tRNA + (6R)-5,10-methylene-5,6,7,8-tetrahydrofolate + NADPH + H(+) = 5-methyluridine(54) in tRNA + (6S)-5,6,7,8-tetrahydrofolate + NADP(+). Catalyzes the folate-dependent formation of 5-methyl-uridine at position 54 (M-5-U54) in all tRNAs. The sequence is that of Methylenetetrahydrofolate--tRNA-(uracil-5-)-methyltransferase TrmFO from Acetivibrio thermocellus (strain ATCC 27405 / DSM 1237 / JCM 9322 / NBRC 103400 / NCIMB 10682 / NRRL B-4536 / VPI 7372) (Clostridium thermocellum).